Consider the following 206-residue polypeptide: Apoptosis regulator OPG045 (206 aa).

Belongs to the orthopoxvirus OPG045 family. As to quaternary structure, homodimer. Interacts with host pro-apoptotic protein BCL2L11 (via BH3 domain). Interacts with host NLRP1. Interacts with host BAK.

Its subcellular location is the host mitochondrion outer membrane. The protein localises to the host cytoplasm. In terms of biological role, plays a role in evading host innate immune response by inhibiting host inflammasome activation. Interacts with and inhibits NLR-mediated interleukin-1 beta/IL1B production in infected cells. At the host mitochondria outer membrane, interacts with the BH3 domain of host BAK and prevents BAK from binding active BAX. In turn, host apoptosis is inhibited. The protein is Apoptosis regulator OPG045 (OPG045) of Vaccinia virus (strain L-IVP) (VACV).